The primary structure comprises 2173 residues: MEDTQAIDWDVEEEEETEQSSESLRCNVEPVGRLHIFSGAHGPEKDFPLHLGKNVVGRMPDCSVALPFPSISKQHAEIEILAWDKAPILRDCGSLNGTQILRPPKVLSPGVSHRLRDQELILFADLLCQYHRLDVSLPFVSRGPLTVEETPRVQGGTQPQRLLLAEDSEEEVDFLSERHVVKKSRTTSSPVAMIVPESDEEGHSPVLGGPGPPFAFNLNSDTDAEEGQQSATEEASSAARRGATIEAEQSEAEVVTEIQLEKDQPSVKERDNDTKVKRGAGNGVVPAGMILERSQPPGEDSDTDVDDDSRPPGRPAEVHLERAQPFGFIDSDTDAEEEGIPATPVVVPMKKRKIFHGVGTRGPGAPGLSHLQESQAGSDTDVEEGKAPQAVPLEKSQASMVINSDTDDEEEVSAALTLARLKESQPAVWNRDAEEDMAHHAVLLQRSQTTTGRDSDTDVEEEELPVENKQTVPKAHTKIRALVRAHSEKDQPPFGDSDDSVEADKSSPGIHLERSQASITVDINTQVEEEVPPGSAIVHMKKHQVSMEGTNQTDVKADGGPAKLLVVSLEEASPPHGDCEIDAEEGTSLAASAVADVRKSQLPAEGDAGAEWTAACLKQERAYEVGAQGGSPVAQVEQDLPTSRENLTDLVVDTDTPGESTQPQREGAQVPTGREREQHVGRTKDSEDNCDDSEDPDLQATQCFLENQGLEAVQSMEDEPTQAFMLTPPQELGSSHCSFQTTGTLDEPWEVLATQPFCLRESEDSETQPFDTHLEAYGPCLSPPRAIPGDQHPESPVHTEPMGIQGRGRQTVDKGMGIPKETAERVGPERGPLERETEKLLPERQTDVTGEEELTRGIQDREQKQLLARDTQRQESDKNGESASPERDRESLKVEIETSKEIQGKQVQKQTLPSKAFEREVERPVADRECEPAELEEKVPKVILERDAQRGEPKGGSQDQKGQASSPTSEPGVGAGDLPGPTSAPVPSGSQSGGRGSPVSPRRHQKGLLNCKMPPTEKASRIGAAEKASRGDQESPDACLPPTVPEASAPPQKPLNSQSQKHLAPQPLLSPLSPSIEPTIRKTGQDRSQEAPETPLSSELEPFHPKPKIITRKSSRMTPFPATSAAPEPHPSTSTAQPVTPKPTSQATRSRTNRSSVKTPEPVVPTVPELQPSTSTDQPVASEPTSQATRGRKNRSSVKTPEAVVPTALELHPSNSTDQPVTPKPTSEAIRSRTNRSSVKTPEAVVPTALELHPSNSTDQPVTPKPTSEAIRSRTNRSSVKTPEPVVPTVPELQPSTSTDQPVTSEPTSQATRGRTNRSSVKTPEPVVPTVPELQPSTSTDQPVASEPTSQATRGRKNRSSVKTPEAVVPTALELHPSNSTDQPVTPKPTSRTTRSRTNMSSVKTPESTVPIAPELPPSTSTEQPVITEPTYQPTRGRKNRSSVKTPETVVATAPKLQSSTSTDQPITPEPTSQATRGRTNRSSVKSPETVLRTAPELQPSTSTHQPVTAKHTSQATRGRTNRSSVKTPEPVVSTAPELQPSTSTHQPITPEPTSQATRGRTDRTSVKTPKIVVPTVPELQASTSTDQPVTSEPTSRTTRGRKNRSSVKTPETVVPTAPEPHPTTSTDQPITPKPTSRATRGRTNRSSVKTPELIVPIAPEFHPSTSRSQLVTPEPTSRATRGRKNRSSVKTPEPAVPTAPELHPTTSTDQPVTPKPTSRATRGRTNRSSVKTPEPVEPAASDLEPFTPTDQPVTPEAIPQGSQSKTLRSSTVSAMLIPTTPEFQSPVTTDQPISPEPIPQASCIKRQRATGNPGSLTAPIDHKPCSAPLEPKSRPSRNQRWGAVRADESLTAIPEPASPQLLDIPTHASQIQKVEPAGRSRFTPELQPKASQSRKRSLAIMDSPPHQKQPQRGEVSQKTVIIKEEEEDTAEKPGKEEDVMTPKPGKRKRDQAEEEPNRIPNRSLRRTKLNQESTAPKVLFTGVVDAQGERAVLALGGSLAGSAAEASHLVTDRIRRTVKFLCALGRGIPILSLDWLHQSRKAGCFLPPDEYVVTDPEQEKNFGFSLQDALSRARERRLLEGYEIYVTPGVQPPPPQMGEIISCCGGTYLPSMPRSYKPQRVVITCPQDFPRCSVPLRVGLPLLSPEFLLTGVLKQEAKPEAFVLSPLEMSST.

Positions 1–19 (MEDTQAIDWDVEEEEETEQ) are enriched in acidic residues. The tract at residues 1 to 22 (MEDTQAIDWDVEEEEETEQSSE) is disordered. Residues 1 to 150 (MEDTQAIDWD…SRGPLTVEET (150 aa)) are interaction with CHEK2. Positions 2 to 222 (EDTQAIDWDV…PFAFNLNSDT (221 aa)) are interaction with the MRN complex. Threonine 4 carries the post-translational modification Phosphothreonine. One can recognise an FHA domain in the interval 54 to 105 (NVVGRMPDCSVALPFPSISKQHAEIEILAWDKAPILRDCGSLNGTQILRPPK). Serine 108 is modified (phosphoserine). Residues 145 to 570 (LTVEETPRVQ…PAKLLVVSLE (426 aa)) are required for nuclear localization (NLS1). Threonine 146 carries the post-translational modification Phosphothreonine. Phosphoserine is present on residues serine 168, serine 176, serine 198, and serine 220. A disordered region spans residues 198–320 (SDEEGHSPVL…PPGRPAEVHL (123 aa)). Threonine 222 carries the phosphothreonine modification. Positions 227–244 (GQQSATEEASSAARRGAT) are enriched in low complexity. Positions 259–276 (QLEKDQPSVKERDNDTKV) are enriched in basic and acidic residues. At serine 301 the chain carries Phosphoserine. Threonine 303 carries the phosphothreonine modification. Over residues 308-320 (DSRPPGRPAEVHL) the composition is skewed to basic and acidic residues. Serine 331 carries the post-translational modification Phosphoserine. At threonine 333 the chain carries Phosphothreonine. The segment at 359–383 (GTRGPGAPGLSHLQESQAGSDTDVE) is disordered. 2 positions are modified to phosphoserine: serine 374 and serine 378. Threonine 380 is modified (phosphothreonine). A phosphoserine mark is found at serine 396, serine 399, and serine 404. A Phosphothreonine modification is found at threonine 406. Serine 413 is modified (phosphoserine). A disordered region spans residues 444–515 (LQRSQTTTGR…SSPGIHLERS (72 aa)). Threonine 451 carries the post-translational modification Phosphothreonine. Serine 455 is modified (phosphoserine). Threonine 457 carries the phosphothreonine modification. Phosphoserine occurs at positions 487, 497, 500, 506, 507, and 515. Threonine 525 carries the post-translational modification Phosphothreonine. At serine 592 the chain carries Phosphoserine. Lysine 618 participates in a covalent cross-link: Glycyl lysine isopeptide (Lys-Gly) (interchain with G-Cter in SUMO1); alternate. Residue lysine 618 forms a Glycyl lysine isopeptide (Lys-Gly) (interchain with G-Cter in SUMO2); alternate linkage. Residue serine 631 is modified to Phosphoserine. Disordered regions lie at residues 652–697 (VDTD…EDPD) and 773–1770 (HLEA…TLRS). The segment covering 673–687 (GREREQHVGRTKDSE) has biased composition (basic and acidic residues). Residues 688–697 (DNCDDSEDPD) show a composition bias toward acidic residues. Phosphoserine is present on residues serine 782 and serine 795. Lysine 814 carries the N6-acetyllysine modification. Composition is skewed to basic and acidic residues over residues 821 to 846 (ETAE…ERQT), 853 to 864 (ELTRGIQDREQK), 870 to 903 (DTQR…KEIQ), and 916 to 953 (AFER…RGEP). Residues serine 957, serine 1000, serine 1035, serine 1070, and serine 1088 each carry the phosphoserine modification. Residues 957-969 (SQDQKGQASSPTS) are compositionally biased toward polar residues. The span at 1079–1090 (TIRKTGQDRSQE) shows a compositional bias: basic and acidic residues. A compositionally biased stretch (basic residues) spans 1105–1115 (PKPKIITRKSS). Positions 1131-1156 (PSTSTAQPVTPKPTSQATRSRTNRSS) are enriched in polar residues. Residues 1150–1694 (SRTNRSSVKT…KNRSSVKTPE (545 aa)) are interaction with the PRKDC complex. A compositionally biased stretch (low complexity) spans 1157–1169 (VKTPEPVVPTVPE). Threonine 1159 is subject to Phosphothreonine. Positions 1171-1189 (QPSTSTDQPVASEPTSQAT) are enriched in polar residues. Threonine 1200 carries the post-translational modification Phosphothreonine. A Phosphoserine modification is found at serine 1237. Phosphothreonine occurs at positions 1241, 1282, and 1304. Over residues 1280–1292 (VKTPEPVVPTVPE) the composition is skewed to low complexity. Residues 1294–1320 (QPSTSTDQPVTSEPTSQATRGRTNRSS) are compositionally biased toward polar residues. Residues 1321-1333 (VKTPEPVVPTVPE) are compositionally biased toward low complexity. Residues 1335-1353 (QPSTSTDQPVASEPTSQAT) show a composition bias toward polar residues. Positions 1390–1402 (TSRTTRSRTNMSS) are enriched in low complexity. Composition is skewed to polar residues over residues 1418–1434 (PSTS…TYQP), 1456–1487 (KLQS…SVKS), 1499–1527 (QPST…SSVK), and 1540–1559 (QPST…QATR). Phosphoserine occurs at positions 1483 and 1484. Lysine 1486 is subject to N6-acetyllysine. 2 positions are modified to phosphothreonine: threonine 1509 and threonine 1550. Low complexity predominate over residues 1567 to 1578 (VKTPKIVVPTVP). The segment covering 1581-1598 (QASTSTDQPVTSEPTSRT) has biased composition (polar residues). Phosphothreonine is present on residues threonine 1617 and threonine 1632. The span at 1626–1639 (STDQPITPKPTSRA) shows a compositional bias: polar residues. Residue serine 1648 is modified to Phosphoserine. A phosphothreonine mark is found at threonine 1651 and threonine 1673. Positions 1664–1680 (PSTSRSQLVTPEPTSRA) are enriched in polar residues. Serine 1688 bears the Phosphoserine mark. Residues threonine 1692, threonine 1714, threonine 1748, and threonine 1755 each carry the phosphothreonine modification. Residues 1705–1721 (PTTSTDQPVTPKPTSRA) are compositionally biased toward polar residues. A compositionally biased stretch (polar residues) spans 1761–1770 (QGSQSKTLRS). Serine 1765 bears the Phosphoserine mark. Threonine 1781 carries the post-translational modification Phosphothreonine. Positions 1782 to 2173 (PEFQSPVTTD…VLSPLEMSST (392 aa)) are required for nuclear localization (NLS2). 2 positions are modified to phosphoserine: serine 1786 and serine 1795. Residues 1809–1971 (RATGNPGSLT…NRSLRRTKLN (163 aa)) form a disordered region. Residue lysine 1824 forms a Glycyl lysine isopeptide (Lys-Gly) (interchain with G-Cter in SUMO2) linkage. Serine 1859 is modified (phosphoserine). A Glycyl lysine isopeptide (Lys-Gly) (interchain with G-Cter in SUMO2) cross-link involves residue lysine 1874. Threonine 1884 carries the phosphothreonine modification. Serine 1904 is subject to Phosphoserine. A compositionally biased stretch (polar residues) spans 1907–1920 (HQKQPQRGEVSQKT). A Glycyl lysine isopeptide (Lys-Gly) (interchain with G-Cter in SUMO1); alternate cross-link involves residue lysine 1924. Lysine 1924 participates in a covalent cross-link: Glycyl lysine isopeptide (Lys-Gly) (interchain with G-Cter in SUMO2); alternate. Residues 1931–1941 (AEKPGKEEDVM) are compositionally biased toward basic and acidic residues. Residue threonine 1942 is modified to Phosphothreonine. BRCT domains follow at residues 1976 to 2054 (APKV…EYVV) and 2075 to 2166 (RERR…FVLS). Arginine 2027 carries the post-translational modification Omega-N-methylarginine.

As to quaternary structure, homodimer. Interacts with H2AX, which requires phosphorylation of H2AX on 'Ser-139'. Interacts with the MRN complex, composed of MRE11, RAD50, and NBN. Interacts with CHEK2, which requires ATM-mediated phosphorylation of 'Thr-68' within the FHA domain of CHEK2. Interacts constitutively with the BRCA1-BARD1 complex, SMC1A and TP53BP1. Interacts with ATM and FANCD2, and these interactions are reduced upon DNA damage. Also interacts with the PRKDC complex, composed of XRCC6/KU70, XRCC5/KU80 and PRKDC/XRCC7. This interaction may be required for PRKDC autophosphorylation, which is essential for DNA double strand break (DSB) repair. When phosphorylated by ATM, interacts with RNF8 (via FHA domain). Interacts with CEP164. When phosphorylated, interacts with APTX (via FHA-like domain). Interacts (when phosphorylated) with TOPBP1; promoting TOPBP1 localization to DNA damage sites during mitosis. Interacts (when phosphorylated) with NBN; promoting NBN and MRN complex localization to DNA damage sites. Phosphorylated upon exposure to ionizing radiation (IR), ultraviolet radiation (UV), and hydroxyurea (HU). Phosphorylation in response to IR requires ATM, NBN, and possibly CHEK2. Also phosphorylated during the G2/M phase of the cell cycle and during activation of the mitotic spindle checkpoint. Phosphorylation at Thr-4 by ATM stabilizes and enhances homodimerization via the FHA domain. Phosphorylated at Ser-168 and Ser-198 by CK2 in response to DNA damage during mitosis, promoting interaction with TOPBP1. Phosphorylated by CK2 in response to DNA damage, promoting interaction with NBN and recruitment of the MRN complex to DNA damage sites. Post-translationally, sumoylation at Lys-1924 by PIAS4 following DNA damage promotes ubiquitin-mediated degradation. In terms of processing, ubiquitinated by RNF4, leading to proteasomal degradation; undergoes 'Lys-48'-linked polyubiquitination.

It is found in the nucleus. It localises to the chromosome. Histone reader protein required for checkpoint-mediated cell cycle arrest in response to DNA damage within both the S phase and G2/M phases of the cell cycle. Specifically recognizes and binds histone H2AX phosphorylated at 'Ser-139', a marker of DNA damage, serving as a scaffold for the recruitment of DNA repair and signal transduction proteins to discrete foci of DNA damage sites. Also required for downstream events subsequent to the recruitment of these proteins. These include phosphorylation and activation of the ATM, CHEK1 and CHEK2 kinases, and stabilization of TP53/p53 and apoptosis. ATM and CHEK2 may also be activated independently by a parallel pathway mediated by TP53BP1. Required for chromosomal stability during mitosis by promoting recruitment of TOPBP1 to DNA double strand breaks (DSBs): TOPBP1 forms filamentous assemblies that bridge MDC1 and tether broken chromosomes during mitosis. Required for the repair of DSBs via homologous recombination by promoting recruitment of NBN component of the MRN complex to DSBs. The chain is Mediator of DNA damage checkpoint protein 1 (MDC1) from Macaca mulatta (Rhesus macaque).